The primary structure comprises 168 residues: Large ribosomal subunit protein uL10 (168 aa).

It belongs to the universal ribosomal protein uL10 family. Part of the ribosomal stalk of the 50S ribosomal subunit. The N-terminus interacts with L11 and the large rRNA to form the base of the stalk. The C-terminus forms an elongated spine to which L12 dimers bind in a sequential fashion forming a multimeric L10(L12)X complex.

Its function is as follows. Forms part of the ribosomal stalk, playing a central role in the interaction of the ribosome with GTP-bound translation factors. The protein is Large ribosomal subunit protein uL10 of Lacticaseibacillus casei (strain BL23) (Lactobacillus casei).